A 149-amino-acid chain; its full sequence is Ribonuclease-like 3 (149 aa).

The N-terminal stretch at 1–22 (MGIHQCTAVVLLLLCASLSTYG) is a signal peptide. Gln-23 is modified (pyrrolidone carboxylic acid). The active-site Proton acceptor is His-38. Cystine bridges form between Cys-48–Cys-109, Cys-66–Cys-120, and Cys-84–Cys-135. 67–71 (KEVNT) lines the substrate pocket. His-142 acts as the Proton donor in catalysis.

This sequence belongs to the pancreatic ribonuclease family. Cleavage between Arg-55 and Arg-56 is catalyzed by a membrane-localized Gram-negative bacterium protease (OmpT in E.coli). The excised fragment is then transported to the bacterium cytosol for cleavage of the disulfide bridge linking Cys-48 and Cys-109, thus separating the N-terminal and LF-ZF3. LF-ZF3 but not the N-terminal peptide possesses bactericidal activity. Strongly expressed in the adult liver and gut, and weakly in the heart and testis.

The protein localises to the secreted. Functionally, ribonuclease. Angiogenic. Plays a role in host defense. Exhibits strong antibacterial activity against Gram-negative bacteria but mild antibacterial activity against Gram-positive bacteria. The RNase activity is not required for the bactericidal activity. The polypeptide is Ribonuclease-like 3 (Danio rerio (Zebrafish)).